The chain runs to 202 residues: Holliday junction branch migration complex subunit RuvA (202 aa).

A domain I region spans residues 1-63 (MIASLRGTVL…EDSMTLYGFT (63 aa)). Residues 64–142 (SQDDRDMFHV…AFAPAESADL (79 aa)) are domain II. Residues 143 to 148 (SSAAPA) form a flexible linker region. A domain III region spans residues 149–202 (AAGPVVEDVVEALIGLGFTDKMARPVVESVVAEQPDAATPVVLRAALSQLGAKK).

This sequence belongs to the RuvA family. As to quaternary structure, homotetramer. Forms an RuvA(8)-RuvB(12)-Holliday junction (HJ) complex. HJ DNA is sandwiched between 2 RuvA tetramers; dsDNA enters through RuvA and exits via RuvB. An RuvB hexamer assembles on each DNA strand where it exits the tetramer. Each RuvB hexamer is contacted by two RuvA subunits (via domain III) on 2 adjacent RuvB subunits; this complex drives branch migration. In the full resolvosome a probable DNA-RuvA(4)-RuvB(12)-RuvC(2) complex forms which resolves the HJ.

It is found in the cytoplasm. In terms of biological role, the RuvA-RuvB-RuvC complex processes Holliday junction (HJ) DNA during genetic recombination and DNA repair, while the RuvA-RuvB complex plays an important role in the rescue of blocked DNA replication forks via replication fork reversal (RFR). RuvA specifically binds to HJ cruciform DNA, conferring on it an open structure. The RuvB hexamer acts as an ATP-dependent pump, pulling dsDNA into and through the RuvAB complex. HJ branch migration allows RuvC to scan DNA until it finds its consensus sequence, where it cleaves and resolves the cruciform DNA. This is Holliday junction branch migration complex subunit RuvA from Corynebacterium aurimucosum (strain ATCC 700975 / DSM 44827 / CIP 107346 / CN-1) (Corynebacterium nigricans).